We begin with the raw amino-acid sequence, 542 residues long: GATA-type transcription factor sreA (542 aa).

Positions 1-10 are enriched in polar residues; it reads MLTLRSSSDT. Residues 1–172 form a disordered region; sequence MLTLRSSSDT…SAQNASGCGS (172 aa). Residues 44–63 are compositionally biased toward basic and acidic residues; sequence ADLRPDSFDASRSPDGDKAS. Composition is skewed to low complexity over residues 75-117 and 148-168; these read SSDQ…PKAS and SSTS…QNAS. Residues 178–196 are cystein-rich region (CRR); sequence CPGGGSCNGTGGAVGCDGC. Low complexity predominate over residues 210–223; sequence APSARQARASPSAQ. The segment at 210-248 is disordered; it reads APSARQARASPSAQTSEEQAQSGLDALDSASQDASGMPK. Residues 250–274 form a GATA-type zinc finger; sequence CQNCGTTLTPLWRRDDQGNTICNAC. Basic residues predominate over residues 289–300; the sequence is MKKTVIKRRKRV. Disordered regions lie at residues 289–408 and 461–525; these read MKKT…PATR and SNAP…REAE. 2 stretches are compositionally biased toward polar residues: residues 311-320 and 369-387; these read AGSSDNSSVS and KPTQ…NHSP. Over residues 396–407 the composition is skewed to low complexity; it reads ESTSAESAPPAT. Positions 464-483 are enriched in polar residues; sequence PARSQTQTQPQPGTRSYSPN. Positions 510–542 form a coiled coil; it reads DKVKAARRAQLQREAENMREALRAKERELASLK.

It is found in the nucleus. Its function is as follows. GATA-type transcription repressor that regulates iron acquisition genes through specific binding the GATA sequence elements of target promoters. SreA targets include genes encoding a number of key iron-regulated factors such as the siderophore biosynthesis genes. Is dispensable for growth on keratin substrates. SreA represses the expression of hapX and the siderophore system during iron sufficient conditions by an iron-sensing mechanism, while hapX represses sreA and activates the siderophore system during iron-limiting conditions resulting in efficient iron uptake and inhibition of iron-consuming pathways. This chain is GATA-type transcription factor sreA, found in Arthroderma benhamiae (strain ATCC MYA-4681 / CBS 112371) (Trichophyton mentagrophytes).